We begin with the raw amino-acid sequence, 444 residues long: Transcription activator AKTR-1 (444 aa).

The segment at residues 16-43 is a DNA-binding region (zn(2)-C6 fungal-type); that stretch reads CDFCTQSKLRCNKNKPSCRRCTIQQQPC. The tract at residues 49–87 is disordered; the sequence is RRTGRPPKHPRKANDCQEANGQHGEQDPVTSTPGGSCQQ. Positions 50 to 59 are enriched in basic residues; it reads RTGRPPKHPR. Residues 76-87 are compositionally biased toward polar residues; it reads PVTSTPGGSCQQ.

The protein resides in the nucleus. Functionally, transcription factor that regulates the expression of the gene clusters that mediate the biosynthesis of the host-selective toxins (HSTs) AK-toxins responsible for Japanese pear black spot disease by the Japanese pear pathotype. AK-toxins are esters of 9,10-epoxy 8-hydroxy 9-methyldecatrienoic acid (EDA). On cellular level, AK-toxins affect plasma membrane of susceptible cells and cause a sudden increase in loss of K(+) after a few minutes of toxin treatment. In Alternaria alternata (Alternaria rot fungus), this protein is Transcription activator AKTR-1.